The following is a 436-amino-acid chain: Methylenetetrahydrofolate--tRNA-(uracil-5-)-methyltransferase TrmFO (436 aa).

7-12 (GAGLAG) provides a ligand contact to FAD.

It belongs to the MnmG family. TrmFO subfamily. FAD is required as a cofactor.

The protein localises to the cytoplasm. It catalyses the reaction uridine(54) in tRNA + (6R)-5,10-methylene-5,6,7,8-tetrahydrofolate + NADH + H(+) = 5-methyluridine(54) in tRNA + (6S)-5,6,7,8-tetrahydrofolate + NAD(+). The enzyme catalyses uridine(54) in tRNA + (6R)-5,10-methylene-5,6,7,8-tetrahydrofolate + NADPH + H(+) = 5-methyluridine(54) in tRNA + (6S)-5,6,7,8-tetrahydrofolate + NADP(+). Its function is as follows. Catalyzes the folate-dependent formation of 5-methyl-uridine at position 54 (M-5-U54) in all tRNAs. The polypeptide is Methylenetetrahydrofolate--tRNA-(uracil-5-)-methyltransferase TrmFO (Caldicellulosiruptor bescii (strain ATCC BAA-1888 / DSM 6725 / KCTC 15123 / Z-1320) (Anaerocellum thermophilum)).